The sequence spans 768 residues: Vitamin B12-dependent ribonucleoside-diphosphate reductase (768 aa).

Residues 3 to 97 (KEVVKRDGTV…LYREKRRAIR (95 aa)) form the ATP-cone domain. Substrate-binding positions include Ser-234, 249-250 (AC), Gly-278, 432-436 (NPCGE), and 579-583 (PTGTI). A disulfide bridge connects residues Cys-250 and Cys-445. The active-site Proton acceptor is the Asn-432. Cys-434 functions as the Cysteine radical intermediate in the catalytic mechanism. Glu-436 acts as the Proton acceptor in catalysis.

Belongs to the ribonucleoside diphosphate reductase class-2 family. As to quaternary structure, monomer. Adenosylcob(III)alamin serves as cofactor.

The enzyme catalyses a 2'-deoxyribonucleoside 5'-diphosphate + [thioredoxin]-disulfide + H2O = a ribonucleoside 5'-diphosphate + [thioredoxin]-dithiol. In terms of biological role, provides the precursors necessary for DNA synthesis. Catalyzes the biosynthesis of deoxyribonucleotides from the corresponding ribonucleotides. The polypeptide is Vitamin B12-dependent ribonucleoside-diphosphate reductase (Thermoplasma acidophilum (strain ATCC 25905 / DSM 1728 / JCM 9062 / NBRC 15155 / AMRC-C165)).